Reading from the N-terminus, the 221-residue chain is PKHD-type hydroxylase P9303_20491 (221 aa).

Residues 80-174 form the Fe2OG dioxygenase domain; the sequence is HIHGVMFSRS…RLVCVGWIQS (95 aa). Positions 98, 100, and 155 each coordinate Fe cation. 2-oxoglutarate is bound at residue Arg165.

Fe(2+) serves as cofactor. It depends on L-ascorbate as a cofactor.

The chain is PKHD-type hydroxylase P9303_20491 from Prochlorococcus marinus (strain MIT 9303).